A 485-amino-acid polypeptide reads, in one-letter code: Pyruvate kinase (485 aa).

Residue Arg33 coordinates substrate. Asn35, Ser37, Asp67, and Thr68 together coordinate K(+). Residue 35-38 participates in ATP binding; sequence NFSH. ATP is bound by residues Arg74 and Lys155. Glu221 is a Mg(2+) binding site. Substrate contacts are provided by Gly244, Asp245, and Thr277. Asp245 lines the Mg(2+) pocket.

Belongs to the pyruvate kinase family. As to quaternary structure, homotetramer. Mg(2+) serves as cofactor. K(+) is required as a cofactor.

It carries out the reaction pyruvate + ATP = phosphoenolpyruvate + ADP + H(+). Its pathway is carbohydrate degradation; glycolysis; pyruvate from D-glyceraldehyde 3-phosphate: step 5/5. This is Pyruvate kinase (pyk) from Chlamydia trachomatis serovar L2 (strain ATCC VR-902B / DSM 19102 / 434/Bu).